The chain runs to 360 residues: Archaemetzincin-2 (360 aa).

Residue His-254 coordinates Zn(2+). Glu-255 (proton acceptor) is an active-site residue. The Zn(2+) site is built by His-258, His-264, Cys-265, Cys-270, Cys-289, and Cys-292.

This sequence belongs to the peptidase M54 family. Zn(2+) is required as a cofactor.

Probable zinc metalloprotease. This is Archaemetzincin-2 (AMZ2) from Pongo abelii (Sumatran orangutan).